Consider the following 254-residue polypeptide: 4-hydroxy-tetrahydrodipicolinate reductase (254 aa).

Residues 8-13, aspartate 35, 86-88, and 110-113 contribute to the NAD(+) site; these read GCSGKM, CST, and SANM. Histidine 143 acts as the Proton donor/acceptor in catalysis. Residue histidine 144 coordinates (S)-2,3,4,5-tetrahydrodipicolinate. Lysine 147 serves as the catalytic Proton donor. 153–154 is a (S)-2,3,4,5-tetrahydrodipicolinate binding site; it reads GT.

It belongs to the DapB family.

The protein localises to the cytoplasm. The enzyme catalyses (S)-2,3,4,5-tetrahydrodipicolinate + NAD(+) + H2O = (2S,4S)-4-hydroxy-2,3,4,5-tetrahydrodipicolinate + NADH + H(+). It catalyses the reaction (S)-2,3,4,5-tetrahydrodipicolinate + NADP(+) + H2O = (2S,4S)-4-hydroxy-2,3,4,5-tetrahydrodipicolinate + NADPH + H(+). Its pathway is amino-acid biosynthesis; L-lysine biosynthesis via DAP pathway; (S)-tetrahydrodipicolinate from L-aspartate: step 4/4. Functionally, catalyzes the conversion of 4-hydroxy-tetrahydrodipicolinate (HTPA) to tetrahydrodipicolinate. This Clostridium perfringens (strain 13 / Type A) protein is 4-hydroxy-tetrahydrodipicolinate reductase.